We begin with the raw amino-acid sequence, 342 residues long: tRNA N6-adenosine threonylcarbamoyltransferase (342 aa).

Fe cation is bound by residues His111 and His115. Residues 134–138, Asp167, Gly180, Asp184, and Asn273 each bind substrate; that span reads LVSGG. Asp298 provides a ligand contact to Fe cation.

Belongs to the KAE1 / TsaD family. Requires Fe(2+) as cofactor.

The protein localises to the cytoplasm. The enzyme catalyses L-threonylcarbamoyladenylate + adenosine(37) in tRNA = N(6)-L-threonylcarbamoyladenosine(37) in tRNA + AMP + H(+). In terms of biological role, required for the formation of a threonylcarbamoyl group on adenosine at position 37 (t(6)A37) in tRNAs that read codons beginning with adenine. Is involved in the transfer of the threonylcarbamoyl moiety of threonylcarbamoyl-AMP (TC-AMP) to the N6 group of A37, together with TsaE and TsaB. TsaD likely plays a direct catalytic role in this reaction. In Gloeobacter violaceus (strain ATCC 29082 / PCC 7421), this protein is tRNA N6-adenosine threonylcarbamoyltransferase.